The primary structure comprises 297 residues: Glycerol-3-phosphate dehydrogenase [NAD(P)+] (297 aa).

Tryptophan 11, arginine 33, and lysine 79 together coordinate NADPH. Positions 79, 107, and 109 each coordinate sn-glycerol 3-phosphate. Alanine 111 provides a ligand contact to NADPH. Sn-glycerol 3-phosphate-binding residues include lysine 161, aspartate 214, serine 224, arginine 225, and asparagine 226. The active-site Proton acceptor is the lysine 161. Arginine 225 provides a ligand contact to NADPH. NADPH contacts are provided by valine 249 and glutamate 251.

Belongs to the NAD-dependent glycerol-3-phosphate dehydrogenase family.

The protein resides in the cytoplasm. The catalysed reaction is sn-glycerol 3-phosphate + NAD(+) = dihydroxyacetone phosphate + NADH + H(+). It catalyses the reaction sn-glycerol 3-phosphate + NADP(+) = dihydroxyacetone phosphate + NADPH + H(+). It participates in membrane lipid metabolism; glycerophospholipid metabolism. Catalyzes the reduction of the glycolytic intermediate dihydroxyacetone phosphate (DHAP) to sn-glycerol 3-phosphate (G3P), the key precursor for phospholipid synthesis. The polypeptide is Glycerol-3-phosphate dehydrogenase [NAD(P)+] (Campylobacter jejuni subsp. jejuni serotype O:23/36 (strain 81-176)).